A 122-amino-acid polypeptide reads, in one-letter code: ATP synthase epsilon chain (122 aa).

Belongs to the ATPase epsilon chain family. In terms of assembly, F-type ATPases have 2 components, CF(1) - the catalytic core - and CF(0) - the membrane proton channel. CF(1) has five subunits: alpha(3), beta(3), gamma(1), delta(1), epsilon(1). CF(0) has three main subunits: a, b and c.

The protein localises to the cell membrane. Its function is as follows. Produces ATP from ADP in the presence of a proton gradient across the membrane. The sequence is that of ATP synthase epsilon chain from Rhodococcus jostii (strain RHA1).